Here is a 1108-residue protein sequence, read N- to C-terminus: Isoleucine--tRNA ligase (1108 aa).

The 'HIGH' region motif lies at 53-63 (PFANGLPHYGH). Positions 654 to 658 (KLSKR) match the 'KMSKS' region motif. Lys657 serves as a coordination point for ATP.

This sequence belongs to the class-I aminoacyl-tRNA synthetase family. IleS type 2 subfamily. In terms of assembly, monomer. Zn(2+) is required as a cofactor.

It is found in the cytoplasm. It carries out the reaction tRNA(Ile) + L-isoleucine + ATP = L-isoleucyl-tRNA(Ile) + AMP + diphosphate. Functionally, catalyzes the attachment of isoleucine to tRNA(Ile). As IleRS can inadvertently accommodate and process structurally similar amino acids such as valine, to avoid such errors it has two additional distinct tRNA(Ile)-dependent editing activities. One activity is designated as 'pretransfer' editing and involves the hydrolysis of activated Val-AMP. The other activity is designated 'posttransfer' editing and involves deacylation of mischarged Val-tRNA(Ile). The sequence is that of Isoleucine--tRNA ligase from Rickettsia bellii (strain RML369-C).